A 356-amino-acid chain; its full sequence is Glutamine synthetase (356 aa).

Residues 19–99 (IIAEYIWIGG…VMCDCYTPRG (81 aa)) enclose the GS beta-grasp domain. Positions 106 to 356 (KRYNAAKILS…IAQTTILWKP (251 aa)) constitute a GS catalytic domain.

It belongs to the glutamine synthetase family. In terms of assembly, homooctamer.

It localises to the cytoplasm. The catalysed reaction is L-glutamate + NH4(+) + ATP = L-glutamine + ADP + phosphate + H(+). This Hordeum vulgare (Barley) protein is Glutamine synthetase.